The following is a 256-amino-acid chain: Alcohol dehydrogenase (256 aa).

12 to 41 (FVAGLGGIGLDTTKELLKRDLKNLVILDRI) serves as a coordination point for NAD(+). Ser-140 contributes to the substrate binding site. The active-site Proton acceptor is the Tyr-153.

This sequence belongs to the short-chain dehydrogenases/reductases (SDR) family. In terms of assembly, homodimer.

The enzyme catalyses a primary alcohol + NAD(+) = an aldehyde + NADH + H(+). It carries out the reaction a secondary alcohol + NAD(+) = a ketone + NADH + H(+). This chain is Alcohol dehydrogenase, found in Drosophila ananassae (Fruit fly).